The chain runs to 347 residues: Ketol-acid reductoisomerase (NADP(+)) (347 aa).

The KARI N-terminal Rossmann domain occupies 1-185; the sequence is MKIYYDEDAN…GGTRAGVLET (185 aa). NADP(+) contacts are provided by residues 24–27, Arg47, Ser50, Ser52, and 82–85; these read YGSQ and DEFQ. His107 is a catalytic residue. Gly133 contributes to the NADP(+) binding site. A KARI C-terminal knotted domain is found at 186 to 336; the sequence is SFKEETETDL…AELRSKMKFL (151 aa). Positions 194, 198, 230, and 234 each coordinate Mg(2+). Ser255 serves as a coordination point for substrate.

This sequence belongs to the ketol-acid reductoisomerase family. The cofactor is Mg(2+).

It carries out the reaction (2R)-2,3-dihydroxy-3-methylbutanoate + NADP(+) = (2S)-2-acetolactate + NADPH + H(+). The enzyme catalyses (2R,3R)-2,3-dihydroxy-3-methylpentanoate + NADP(+) = (S)-2-ethyl-2-hydroxy-3-oxobutanoate + NADPH + H(+). It participates in amino-acid biosynthesis; L-isoleucine biosynthesis; L-isoleucine from 2-oxobutanoate: step 2/4. The protein operates within amino-acid biosynthesis; L-valine biosynthesis; L-valine from pyruvate: step 2/4. Its function is as follows. Involved in the biosynthesis of branched-chain amino acids (BCAA). Catalyzes an alkyl-migration followed by a ketol-acid reduction of (S)-2-acetolactate (S2AL) to yield (R)-2,3-dihydroxy-isovalerate. In the isomerase reaction, S2AL is rearranged via a Mg-dependent methyl migration to produce 3-hydroxy-3-methyl-2-ketobutyrate (HMKB). In the reductase reaction, this 2-ketoacid undergoes a metal-dependent reduction by NADPH to yield (R)-2,3-dihydroxy-isovalerate. The polypeptide is Ketol-acid reductoisomerase (NADP(+)) (Gamma-proteobacterium EBAC31A08).